A 179-amino-acid chain; its full sequence is Small ribosomal subunit protein eS10x (179 aa).

The disordered stretch occupies residues 90-179; sequence TLKKSAKPGG…AAAPSGSGLP (90 aa). Positions 108-129 are enriched in basic and acidic residues; it reads DRSRGPRHEGGDRPRFGDRDGY. The span at 134 to 144 shows a compositional bias: gly residues; that stretch reads RAGGEFGGEKG. Positions 145–156 are enriched in low complexity; sequence GAPADYQPSFQG. The span at 157-167 shows a compositional bias: gly residues; the sequence is SGRGFGRGAGG. Over residues 168 to 179 the composition is skewed to low complexity; it reads YSAAAPSGSGLP.

It belongs to the eukaryotic ribosomal protein eS10 family.

It localises to the cytoplasm. The chain is Small ribosomal subunit protein eS10x (RPS10C) from Arabidopsis thaliana (Mouse-ear cress).